We begin with the raw amino-acid sequence, 1000 residues long: SEC23-interacting protein (1000 aa).

An interaction with SEC23A region spans residues 1–367; the sequence is MAERKPNGGS…YTEEFSEKLE (367 aa). A disordered region spans residues 133–252; the sequence is FSPSISKAQP…QQVPARPGAP (120 aa). Residues 154–167 show a composition bias toward low complexity; that stretch reads SYLPSQPSSLPPSY. The segment covering 207–218 has biased composition (pro residues); the sequence is PGPPAHPPPSGP. Residues 235–246 are compositionally biased toward low complexity; it reads SSVQSPAQQQVP. The region spanning 644-707 is the SAM domain; the sequence is KEVLTLQETL…NFVEHKAAKL (64 aa). The tract at residues 716-748 is disordered; that stretch reads AVAATSTKGQEQSAQKTKDMASLPSESNEPKRK. Phosphoserine occurs at positions 737 and 926. The 211-residue stretch at 779–989 folds into the DDHD domain; sequence LDFEPEIFFA…ALLLLKEIYR (211 aa).

Belongs to the PA-PLA1 family. As to quaternary structure, interacts with SEC23A. In terms of tissue distribution, ubiquitously expressed with stronger levels detected in heart, liver and skeletal muscle.

Its subcellular location is the cytoplasmic vesicle. The protein resides in the COPII-coated vesicle membrane. It localises to the endoplasmic reticulum. Plays a role in the organization of endoplasmic reticulum exit sites. Specifically binds to phosphatidylinositol 3-phosphate (PI(3)P), phosphatidylinositol 4-phosphate (PI(4)P) and phosphatidylinositol 5-phosphate (PI(5)P). In Homo sapiens (Human), this protein is SEC23-interacting protein (SEC23IP).